We begin with the raw amino-acid sequence, 30 residues long: Poly-His-poly-Gly peptide 2 (30 aa).

Basic residues predominate over residues 1-18; that stretch reads EDDHDHHHHHHHHHHHHG. Residues 1–30 are disordered; it reads EDDHDHHHHHHHHHHHHGVGGGGGGGGGGA. Residues 19–30 are compositionally biased toward gly residues; sequence VGGGGGGGGGGA.

In terms of tissue distribution, expressed by the venom gland.

It is found in the secreted. May serve as a metalloproteinase inhibitor during glandular storage. Their inhibition may be instantly disengaged, by dilution or physiochemical change, when venom is injected into tissue of the victim. The chain is Poly-His-poly-Gly peptide 2 from Atheris nitschei (Great lakes bush viper).